The primary structure comprises 351 residues: Nicotinate-nucleotide--dimethylbenzimidazole phosphoribosyltransferase (351 aa).

Residue Glu-317 is the Proton acceptor of the active site.

It belongs to the CobT family.

The catalysed reaction is 5,6-dimethylbenzimidazole + nicotinate beta-D-ribonucleotide = alpha-ribazole 5'-phosphate + nicotinate + H(+). It functions in the pathway nucleoside biosynthesis; alpha-ribazole biosynthesis; alpha-ribazole from 5,6-dimethylbenzimidazole: step 1/2. In terms of biological role, catalyzes the synthesis of alpha-ribazole-5'-phosphate from nicotinate mononucleotide (NAMN) and 5,6-dimethylbenzimidazole (DMB). In Pseudomonas aeruginosa (strain ATCC 15692 / DSM 22644 / CIP 104116 / JCM 14847 / LMG 12228 / 1C / PRS 101 / PAO1), this protein is Nicotinate-nucleotide--dimethylbenzimidazole phosphoribosyltransferase.